The primary structure comprises 494 residues: Glycerol kinase (494 aa).

ADP is bound at residue T13. ATP-binding residues include T13, T14, and S15. Residue T13 participates in sn-glycerol 3-phosphate binding. R17 lines the ADP pocket. Sn-glycerol 3-phosphate is bound by residues R83, E84, Y135, and D244. Glycerol-binding residues include R83, E84, Y135, D244, and Q245. 2 residues coordinate ADP: T266 and G309. ATP-binding residues include T266, G309, Q313, and G410. Positions 410 and 414 each coordinate ADP.

Belongs to the FGGY kinase family.

It catalyses the reaction glycerol + ATP = sn-glycerol 3-phosphate + ADP + H(+). It participates in polyol metabolism; glycerol degradation via glycerol kinase pathway; sn-glycerol 3-phosphate from glycerol: step 1/1. Inhibited by fructose 1,6-bisphosphate (FBP). Key enzyme in the regulation of glycerol uptake and metabolism. Catalyzes the phosphorylation of glycerol to yield sn-glycerol 3-phosphate. This is Glycerol kinase from Shewanella baltica (strain OS223).